A 910-amino-acid chain; its full sequence is Short transient receptor potential channel 3 (910 aa).

A disordered region spans residues M1–A93. Over M1–F448 the chain is Cytoplasmic. Acidic residues predominate over residues P19–G29. The span at P48–G58 shows a compositional bias: pro residues. The span at P59 to S68 shows a compositional bias: low complexity. ANK repeat units lie at residues A100–V129, M135–I164, D166–S192, and P221–R250. E147 serves as a coordination point for Ca(2+). The chain crosses the membrane as a helical span at residues V449 to A466. Residues S467–T497 are Extracellular-facing. The N-linked (GlcNAc...) asparagine glycan is linked to N478. The chain crosses the membrane as a helical span at residues W498–K516. 3 residues coordinate Ca(2+): E514, E517, and N532. Residues E517 to Q529 are Cytoplasmic-facing. The chain crosses the membrane as a helical span at residues L530–L551. At A552–D595 the chain is on the extracellular side. A helical membrane pass occupies residues P596 to L619. The Cytoplasmic segment spans residues P620 to D638. The ANK 5 repeat unit spans residues E623–A652. The chain crosses the membrane as a helical span at residues I639–S662. Topologically, residues Y663–H702 are extracellular. Residues K703–L728 form a helical membrane-spanning segment. The Cytoplasmic segment spans residues I729–E910. Residues E860, E863, E865, and D872 each coordinate Ca(2+).

Belongs to the transient receptor (TC 1.A.4) family. STrpC subfamily. TRPC3 sub-subfamily. As to quaternary structure, homotetramer. Interacts with ITPR1, ITPR3, MX1 and RNF24. Interacts with JPH2; the interaction is involved in maintaining Ca(2+) homeostasis in skeletal muscle and is mediated by JPH2 'Ser-165' phosphorylation. In terms of tissue distribution, abundantly expressed in brain. Concentrated in cerebellar Purkinje cells and sparsely localized in cerebellar granule lyer, pontine nuclei and thalamus. Lower levels detected in other tissues.

The protein localises to the cell membrane. The enzyme catalyses Ca(2+)(in) = Ca(2+)(out). With respect to regulation, activated by diacylglycerol (DAG) in a membrane-delimited fashion, independently of protein kinase C. Activated by inositol 1,4,5-triphosphate receptors (ITPR) with bound IP3. May be activated by internal calcium store depletion. Inhibited by intracellular Ca(2+). Its function is as follows. Forms a receptor-activated non-selective calcium permeant cation channel. May be operated by a phosphatidylinositol second messenger system activated by receptor tyrosine kinases or G-protein coupled receptors. The sequence is that of Short transient receptor potential channel 3 (Trpc3) from Mus musculus (Mouse).